The following is a 348-amino-acid chain: Tetraacyldisaccharide 4'-kinase (348 aa).

50-57 (TMGGTGKT) is an ATP binding site.

The protein belongs to the LpxK family.

It catalyses the reaction a lipid A disaccharide + ATP = a lipid IVA + ADP + H(+). It participates in glycolipid biosynthesis; lipid IV(A) biosynthesis; lipid IV(A) from (3R)-3-hydroxytetradecanoyl-[acyl-carrier-protein] and UDP-N-acetyl-alpha-D-glucosamine: step 6/6. Functionally, transfers the gamma-phosphate of ATP to the 4'-position of a tetraacyldisaccharide 1-phosphate intermediate (termed DS-1-P) to form tetraacyldisaccharide 1,4'-bis-phosphate (lipid IVA). The polypeptide is Tetraacyldisaccharide 4'-kinase (Desulfotalea psychrophila (strain LSv54 / DSM 12343)).